A 158-amino-acid chain; its full sequence is Cyclic pyranopterin monophosphate synthase (158 aa).

Residues 75 to 77 (LCH) and 113 to 114 (ME) contribute to the substrate site. Asp-128 is an active-site residue.

It belongs to the MoaC family. In terms of assembly, homohexamer; trimer of dimers.

It catalyses the reaction (8S)-3',8-cyclo-7,8-dihydroguanosine 5'-triphosphate = cyclic pyranopterin phosphate + diphosphate. The protein operates within cofactor biosynthesis; molybdopterin biosynthesis. Catalyzes the conversion of (8S)-3',8-cyclo-7,8-dihydroguanosine 5'-triphosphate to cyclic pyranopterin monophosphate (cPMP). The protein is Cyclic pyranopterin monophosphate synthase of Vibrio campbellii (strain ATCC BAA-1116).